A 415-amino-acid polypeptide reads, in one-letter code: Lipid II:glycine glycyltransferase (415 aa).

Belongs to the FemABX family.

Its subcellular location is the cytoplasm. The catalysed reaction is beta-D-GlcNAc-(1-&gt;4)-Mur2Ac(oyl-L-Ala-D-isoglutaminyl-L-Lys-D-Ala-D-Ala)-di-trans,octa-cis-undecaprenyl diphosphate + glycyl-tRNA(Gly) = beta-D-GlcNAc-(1-&gt;4)-Mur2Ac(oyl-L-Ala-D-isoglutaminyl-L-Lys-(N(6)-Gly)-D-Ala-D-Ala)-di-trans,octa-cis-undecaprenyl diphosphate + tRNA(Gly) + H(+). Its function is as follows. Catalyzes the incorporation of amino acid(s) into the interchain peptide bridge of peptidoglycan, using aminoacyl-tRNA as amino acid donor. The polypeptide is Lipid II:glycine glycyltransferase (femX) (Staphylococcus saprophyticus subsp. saprophyticus (strain ATCC 15305 / DSM 20229 / NCIMB 8711 / NCTC 7292 / S-41)).